Reading from the N-terminus, the 248-residue chain is 3-deoxy-manno-octulosonate cytidylyltransferase (248 aa).

This sequence belongs to the KdsB family.

It localises to the cytoplasm. It catalyses the reaction 3-deoxy-alpha-D-manno-oct-2-ulosonate + CTP = CMP-3-deoxy-beta-D-manno-octulosonate + diphosphate. It participates in nucleotide-sugar biosynthesis; CMP-3-deoxy-D-manno-octulosonate biosynthesis; CMP-3-deoxy-D-manno-octulosonate from 3-deoxy-D-manno-octulosonate and CTP: step 1/1. The protein operates within bacterial outer membrane biogenesis; lipopolysaccharide biosynthesis. Its function is as follows. Activates KDO (a required 8-carbon sugar) for incorporation into bacterial lipopolysaccharide in Gram-negative bacteria. The polypeptide is 3-deoxy-manno-octulosonate cytidylyltransferase (Escherichia coli O139:H28 (strain E24377A / ETEC)).